The primary structure comprises 135 residues: Antennal-specific protein OS-C (135 aa).

The first 27 residues, 1–27 (MGFHMGRQLLLSGFLLVMLQMVTQTQA), serve as a signal peptide directing secretion. The tract at residues 43-84 (VIKREGDDDGDDDDSSSEETVEDSEESRRRRREVNTDNTPSA) is disordered. Residues 49 to 67 (DDDGDDDDSSSEETVEDSE) show a composition bias toward acidic residues.

Antenna. In the third antennal segment. Expressed in sencilla coeloconica.

The chain is Antennal-specific protein OS-C (Os-C) from Drosophila melanogaster (Fruit fly).